Reading from the N-terminus, the 440-residue chain is Exodeoxyribonuclease 7 large subunit (440 aa).

The protein belongs to the XseA family. In terms of assembly, heterooligomer composed of large and small subunits.

It is found in the cytoplasm. The enzyme catalyses Exonucleolytic cleavage in either 5'- to 3'- or 3'- to 5'-direction to yield nucleoside 5'-phosphates.. Its function is as follows. Bidirectionally degrades single-stranded DNA into large acid-insoluble oligonucleotides, which are then degraded further into small acid-soluble oligonucleotides. The chain is Exodeoxyribonuclease 7 large subunit from Ralstonia nicotianae (strain ATCC BAA-1114 / GMI1000) (Ralstonia solanacearum).